The sequence spans 291 residues: Porphobilinogen deaminase (291 aa).

C237 carries the post-translational modification S-(dipyrrolylmethanemethyl)cysteine.

The protein belongs to the HMBS family. In terms of assembly, monomer. It depends on dipyrromethane as a cofactor.

It catalyses the reaction 4 porphobilinogen + H2O = hydroxymethylbilane + 4 NH4(+). The protein operates within porphyrin-containing compound metabolism; protoporphyrin-IX biosynthesis; coproporphyrinogen-III from 5-aminolevulinate: step 2/4. Its function is as follows. Tetrapolymerization of the monopyrrole PBG into the hydroxymethylbilane pre-uroporphyrinogen in several discrete steps. This is Porphobilinogen deaminase from Clostridium perfringens (strain 13 / Type A).